Here is a 303-residue protein sequence, read N- to C-terminus: Histone deacetylase HDT2 (303 aa).

Residues Glu100 to Leu112 show a composition bias toward acidic residues. The interval Glu100 to Cys282 is disordered. The segment covering Glu119–Glu133 has biased composition (basic and acidic residues). A compositionally biased stretch (acidic residues) spans Asp154–Thr203. Basic and acidic residues predominate over residues Pro204–Ala217. The C2H2-type zinc finger occupies Val277–His300.

This sequence belongs to the histone deacetylase HD2 family. Multimer. Possibly forms a homotrimer with HDT1 and/or HDT3.

It is found in the nucleus. Its subcellular location is the nucleolus. Functionally, mediates the deacetylation of lysine residues on the N-terminal part of the core histones (H2A, H2B, H3 and H4). Histone deacetylation gives a tag for epigenetic repression and plays an important role in transcriptional regulation, cell cycle progression and developmental events. This chain is Histone deacetylase HDT2 (HDT2), found in Zea mays (Maize).